Reading from the N-terminus, the 118-residue chain is MYVQLKIINFYKTHQKPNLRIVYFFFFFGLETFFSIINPNDLTFFNYVIGVNNLDLTKKPNSSVDELIYFFDYLDSCWSSLMKSSNQNSKPIPWGLLLSNLIRWYDSNTIEALINNIL.

Residues 21–38 (IVYFFFFFGLETFFSIIN) form a helical membrane-spanning segment.

The protein localises to the membrane. This is an uncharacterized protein from Dictyostelium discoideum (Social amoeba).